Reading from the N-terminus, the 459-residue chain is DnaJ protein homolog XDJ1 (459 aa).

Residues 7–79 enclose the J domain; the sequence is GDRLYDVLGV…KSHYDLYGDD (73 aa). The CR-type zinc-finger motif lies at 146–240; it reads GKKLKFDLKR…CAGLGLLSKK (95 aa). CXXCXGXG motif repeat units lie at residues 159–166, 181–188, 208–215, and 228–235; these read CIKCHGSG, CESCAGKG, CEKCNGKG, and CPDCAGLG.

Its subcellular location is the mitochondrion outer membrane. This Saccharomyces cerevisiae (strain ATCC 204508 / S288c) (Baker's yeast) protein is DnaJ protein homolog XDJ1 (XDJ1).